The primary structure comprises 92 residues: RNA-binding protein Hfq (92 aa).

Positions Asp-9–Phe-68 constitute a Sm domain.

The protein belongs to the Hfq family. Homohexamer.

Functionally, RNA chaperone that binds small regulatory RNA (sRNAs) and mRNAs to facilitate mRNA translational regulation in response to envelope stress, environmental stress and changes in metabolite concentrations. Also binds with high specificity to tRNAs. In Shewanella halifaxensis (strain HAW-EB4), this protein is RNA-binding protein Hfq.